We begin with the raw amino-acid sequence, 340 residues long: Glycerol-3-phosphate dehydrogenase [NAD(P)+] (340 aa).

The NADPH site is built by Ser-14, Tyr-15, His-35, and Lys-109. Residues Lys-109, Gly-138, and Thr-140 each contribute to the sn-glycerol 3-phosphate site. Ala-142 lines the NADPH pocket. Residues Lys-194, Asp-247, Ser-257, Arg-258, and Asn-259 each contribute to the sn-glycerol 3-phosphate site. The active-site Proton acceptor is the Lys-194. Residue Arg-258 coordinates NADPH. NADPH is bound by residues Val-282 and Glu-284.

This sequence belongs to the NAD-dependent glycerol-3-phosphate dehydrogenase family.

The protein resides in the cytoplasm. The catalysed reaction is sn-glycerol 3-phosphate + NAD(+) = dihydroxyacetone phosphate + NADH + H(+). It catalyses the reaction sn-glycerol 3-phosphate + NADP(+) = dihydroxyacetone phosphate + NADPH + H(+). It functions in the pathway membrane lipid metabolism; glycerophospholipid metabolism. Functionally, catalyzes the reduction of the glycolytic intermediate dihydroxyacetone phosphate (DHAP) to sn-glycerol 3-phosphate (G3P), the key precursor for phospholipid synthesis. This is Glycerol-3-phosphate dehydrogenase [NAD(P)+] from Photorhabdus laumondii subsp. laumondii (strain DSM 15139 / CIP 105565 / TT01) (Photorhabdus luminescens subsp. laumondii).